A 218-amino-acid polypeptide reads, in one-letter code: Ribose-5-phosphate isomerase A (218 aa).

Residues 28-31, 81-84, and 94-97 each bind substrate; these read TGST, DGAD, and KGGG. The active-site Proton acceptor is the Glu103. Residue Lys121 coordinates substrate.

This sequence belongs to the ribose 5-phosphate isomerase family. As to quaternary structure, homodimer.

It catalyses the reaction aldehydo-D-ribose 5-phosphate = D-ribulose 5-phosphate. The protein operates within carbohydrate degradation; pentose phosphate pathway; D-ribose 5-phosphate from D-ribulose 5-phosphate (non-oxidative stage): step 1/1. Functionally, catalyzes the reversible conversion of ribose-5-phosphate to ribulose 5-phosphate. The protein is Ribose-5-phosphate isomerase A of Shewanella piezotolerans (strain WP3 / JCM 13877).